Consider the following 433-residue polypeptide: Histidinol dehydrogenase (433 aa).

3 residues coordinate substrate: serine 236, glutamine 258, and histidine 261. Positions 258 and 261 each coordinate Zn(2+). Active-site proton acceptor residues include glutamate 325 and histidine 326. Positions 326, 359, 413, and 418 each coordinate substrate. Aspartate 359 provides a ligand contact to Zn(2+). Histidine 418 contributes to the Zn(2+) binding site.

It belongs to the histidinol dehydrogenase family. Zn(2+) is required as a cofactor.

It carries out the reaction L-histidinol + 2 NAD(+) + H2O = L-histidine + 2 NADH + 3 H(+). Its pathway is amino-acid biosynthesis; L-histidine biosynthesis; L-histidine from 5-phospho-alpha-D-ribose 1-diphosphate: step 9/9. Functionally, catalyzes the sequential NAD-dependent oxidations of L-histidinol to L-histidinaldehyde and then to L-histidine. This Pseudoalteromonas translucida (strain TAC 125) protein is Histidinol dehydrogenase.